The chain runs to 681 residues: Phenylalanine--tRNA ligase beta subunit (681 aa).

The 76-residue stretch at 288–363 (PARETVLLRP…RIHGYDQIPE (76 aa)) folds into the B5 domain. The Mg(2+) site is built by aspartate 341, aspartate 347, glutamate 350, and glutamate 351. Residues 586–681 (SSFPSIQRDL…EKQLEAVLLR (96 aa)) enclose the FDX-ACB domain.

Belongs to the phenylalanyl-tRNA synthetase beta subunit family. Type 1 subfamily. In terms of assembly, tetramer of two alpha and two beta subunits. Mg(2+) is required as a cofactor.

It is found in the cytoplasm. The catalysed reaction is tRNA(Phe) + L-phenylalanine + ATP = L-phenylalanyl-tRNA(Phe) + AMP + diphosphate + H(+). The sequence is that of Phenylalanine--tRNA ligase beta subunit from Rhodopirellula baltica (strain DSM 10527 / NCIMB 13988 / SH1).